A 388-amino-acid polypeptide reads, in one-letter code: Xylose isomerase (388 aa).

Residues H54 and D57 contribute to the active site. The Mg(2+) site is built by E181, E217, H220, D245, D255, D257, and D287.

This sequence belongs to the xylose isomerase family. In terms of assembly, homotetramer. Requires Mg(2+) as cofactor.

The protein resides in the cytoplasm. The enzyme catalyses alpha-D-xylose = alpha-D-xylulofuranose. The sequence is that of Xylose isomerase from Streptomyces olivaceoviridis (Streptomyces corchorusii).